We begin with the raw amino-acid sequence, 410 residues long: NADH-quinone oxidoreductase subunit H (410 aa).

The next 9 helical transmembrane spans lie at 16 to 36 (LILAKSLGVFVFLLLTVLAAI), 84 to 104 (WIYLAAPVISVIPAFMAFAVI), 124 to 144 (LPVAVLYILAVTSIGVYGIVL), 165 to 185 (VISYEIAMALSFVAVFIYAGT), 198 to 218 (VWFIFLLLPSFLVYLTSMVGE), 260 to 280 (VSALATTLFLGGWHAPWPISI), 288 to 308 (WWPLLWFTAKVWLFLFFFMWL), 320 to 340 (FMRLGWKLLIPVSLAWIAIVA), and 353 to 373 (WVTALIGVAGVAAILASLLAW). The disordered stretch occupies residues 384–410 (SHSPPAQSSDHGAFPVPPLPVKEPADA).

This sequence belongs to the complex I subunit 1 family. As to quaternary structure, NDH-1 is composed of 14 different subunits. Subunits NuoA, H, J, K, L, M, N constitute the membrane sector of the complex.

The protein resides in the cell membrane. The catalysed reaction is a quinone + NADH + 5 H(+)(in) = a quinol + NAD(+) + 4 H(+)(out). Its function is as follows. NDH-1 shuttles electrons from NADH, via FMN and iron-sulfur (Fe-S) centers, to quinones in the respiratory chain. The immediate electron acceptor for the enzyme in this species is believed to be menaquinone. Couples the redox reaction to proton translocation (for every two electrons transferred, four hydrogen ions are translocated across the cytoplasmic membrane), and thus conserves the redox energy in a proton gradient. This chain is NADH-quinone oxidoreductase subunit H, found in Mycolicibacterium gilvum (strain PYR-GCK) (Mycobacterium gilvum (strain PYR-GCK)).